Consider the following 231-residue polypeptide: MQLPIPLFPATLIRRYKRFLADFELESGEIVTAHCPNSGSMKGCATPGSPAFLSRSDKPERKLKYTWELVKADGCWIGINTGLPNRLVREAIENGLVAELQGYQTIRPEVRYGENSRIDLLLCNADQLCYVEVKNVTLVEGNAVLFPDAATTRGQKHLRELMGVVRQGHRAVNFFVVQRADGEFVAPADLIDPEYGRLLRQAAANGVEILAYRAHVAPEGINITGKLSVRM.

Belongs to the SfsA family.

The sequence is that of Sugar fermentation stimulation protein homolog from Geotalea uraniireducens (strain Rf4) (Geobacter uraniireducens).